Reading from the N-terminus, the 171-residue chain is S-ribosylhomocysteine lyase (171 aa).

3 residues coordinate Fe cation: histidine 54, histidine 58, and cysteine 128.

The protein belongs to the LuxS family. As to quaternary structure, homodimer. The cofactor is Fe cation.

The enzyme catalyses S-(5-deoxy-D-ribos-5-yl)-L-homocysteine = (S)-4,5-dihydroxypentane-2,3-dione + L-homocysteine. Its function is as follows. Involved in the synthesis of autoinducer 2 (AI-2) which is secreted by bacteria and is used to communicate both the cell density and the metabolic potential of the environment. The regulation of gene expression in response to changes in cell density is called quorum sensing. Catalyzes the transformation of S-ribosylhomocysteine (RHC) to homocysteine (HC) and 4,5-dihydroxy-2,3-pentadione (DPD). The chain is S-ribosylhomocysteine lyase from Salmonella agona (strain SL483).